The primary structure comprises 344 residues: UDP-3-O-acylglucosamine N-acyltransferase (344 aa).

The active-site Proton acceptor is the histidine 244.

Belongs to the transferase hexapeptide repeat family. LpxD subfamily. As to quaternary structure, homotrimer.

It catalyses the reaction a UDP-3-O-[(3R)-3-hydroxyacyl]-alpha-D-glucosamine + a (3R)-hydroxyacyl-[ACP] = a UDP-2-N,3-O-bis[(3R)-3-hydroxyacyl]-alpha-D-glucosamine + holo-[ACP] + H(+). It functions in the pathway bacterial outer membrane biogenesis; LPS lipid A biosynthesis. Catalyzes the N-acylation of UDP-3-O-acylglucosamine using 3-hydroxyacyl-ACP as the acyl donor. Is involved in the biosynthesis of lipid A, a phosphorylated glycolipid that anchors the lipopolysaccharide to the outer membrane of the cell. This chain is UDP-3-O-acylglucosamine N-acyltransferase, found in Pseudoalteromonas atlantica (strain T6c / ATCC BAA-1087).